A 376-amino-acid polypeptide reads, in one-letter code: Nuclear egress protein 1 (376 aa).

At Ser-19 the chain carries Phosphoserine. Residues 22–57 form a disordered region; it reads RKRRQRELASKVASTVNGATSANNHGEPPSPADARP. Residues 33–45 are compositionally biased toward polar residues; it reads VASTVNGATSANN. Residues 106 to 211 form a CCCH-type zinc finger; sequence CLDISPYGNE…HVIFENSDVH (106 aa). A disordered region spans residues 316–376; that stretch reads VVSTNGCGPS…PLFLNSIRAP (61 aa). Polar residues predominate over residues 317–332; it reads VSTNGCGPSSSSQSTP.

It belongs to the herpesviridae NEC1 protein family. As to quaternary structure, forms a heterohexameric complex with NEC2. Interacts with capsid vertex specific component 2/CVC2; this interaction directs the capsid to the host inner nuclear membrane to initiate budding. Post-translationally, phosphorylated at serine residues in the N-terminus. This phosphorylation regulates the localization within the inner nuclear membrane. Phosphorylation by viral kinase UL97 at Ser-19 plays an important role for correct viral nuclear egress complex (NEC) localization.

The protein resides in the host nucleus inner membrane. Functionally, plays an essential role in virion nuclear egress, the first step of virion release from infected cell. Within the host nucleus, NEC1 interacts with the newly formed capsid through the vertexes and directs it to the inner nuclear membrane by associating with NEC2. Induces the budding of the capsid at the inner nuclear membrane as well as its envelopment into the perinuclear space. There, the NEC1/NEC2 complex promotes the fusion of the enveloped capsid with the outer nuclear membrane and the subsequent release of the viral capsid into the cytoplasm where it will reach the secondary budding sites in the host Golgi or trans-Golgi network. The polypeptide is Nuclear egress protein 1 (Homo sapiens (Human)).